The chain runs to 324 residues: Beta-ketoacyl-[acyl-carrier-protein] synthase III (324 aa).

Active-site residues include cysteine 113 and histidine 251. Residues 252–256 (QANKR) form an ACP-binding region. Residue asparagine 281 is part of the active site.

The protein belongs to the thiolase-like superfamily. FabH family. As to quaternary structure, homodimer.

It localises to the cytoplasm. The enzyme catalyses malonyl-[ACP] + acetyl-CoA + H(+) = 3-oxobutanoyl-[ACP] + CO2 + CoA. Its pathway is lipid metabolism; fatty acid biosynthesis. Catalyzes the condensation reaction of fatty acid synthesis by the addition to an acyl acceptor of two carbons from malonyl-ACP. Catalyzes the first condensation reaction which initiates fatty acid synthesis and may therefore play a role in governing the total rate of fatty acid production. Possesses both acetoacetyl-ACP synthase and acetyl transacylase activities. Its substrate specificity determines the biosynthesis of branched-chain and/or straight-chain of fatty acids. The sequence is that of Beta-ketoacyl-[acyl-carrier-protein] synthase III from Bartonella bacilliformis (strain ATCC 35685 / KC583 / Herrer 020/F12,63).